Consider the following 991-residue polypeptide: MGVPALFRLLSRKFAKVITPVIEAPTEKLPDGTEIEPDLSLPNPNGVECDNLYLDMNGIVHPCSHPEDRPAPETEDEMMVAVFEYTDRILAMVRPRQLLFIAIDGVAPRAKMNQQRSRRFRSSREAALKEEELQAFIEEAKQQGIPIDENATKKKSWDSNCITPGTPFMDTLAKSLRYYIINKLNSDPCWRNVRFILSDASVPGEGEHKIMEFIRSQRVKPEYDPNTHHVVYGLDADLIMLGLATHEPHFRVLREDVFFQQGSTKKTKEERLGIKRLDDVSETNKVPVKKPFIWLNVSILREYLEVELYVPNLPFPFDLERAIDDWVFFIFFVGNDFLPHLPSLDIRDGAVERLTEIWRASLPHMGGYLTLDGSVNLARAEVILSAVGNQEDDIFKRLKQQEDRRNENYRRRQQRESNQESESYVDNVVIQRSVETQSTEVVTSSKSTSVDTKPPKKTQKIDAPAPVDLVNLSEKTSNRSLGATNRELINNRAANRLGLSREAAAVSSVNKLAASALKAQLVSNETLQNVPLEDSIASSSAYEDTDSIESSTPVVHPIDTKVSNVGQKRKAPDSTEENENTDTVRLYEPGYRERYYEQKFHISPDEPEKIREAVKHYVHGLCWVLLYYYQGCPSWTWYYPYHYAPFAADFKDLASIDVKFELNQPFKPYEQLLGVLPAASKNNLPEKLQTLMTDENSEIIDFYPENFTIDLNGKKFEWQGVALLPFIDENRLLNAVSKIYPQLTEEESKRNEDGSTLLFISEHHPMFSELVKQLYSKKRQGKPLKLSGKMAHGLFGKVNTNDSVIPNVSVQCPIDVTSADALQKYGSIDDNQSISLVFEVPKSHFVHKSMLLRGVKMPNRVLTPEDINQVRAERSFSSRRNNGNSYRGGHQSYGVRRSYQSQSYSSRQSYTGVTNGFANGGVQPPWSGNGNFPRSNASYNSRGGHEGYGGRSRGGGYSNGPPAGNHYSSNRGKGYGYQRESYNNNNRNGYY.

A Nuclear localization signal motif is present at residues Thr-264 to Lys-268. Basic and acidic residues predominate over residues Arg-404 to Asn-418. Disordered regions lie at residues Arg-404–Ile-461, Ser-547–Asp-582, and Ala-872–Tyr-991. Low complexity predominate over residues Ser-433–Thr-452. Low complexity-rich tracts occupy residues Ser-878–Gly-889 and Arg-896–Tyr-910. A compositionally biased stretch (polar residues) spans Trp-926 to Ser-938. The span at Glu-946–Ser-958 shows a compositional bias: gly residues. A compositionally biased stretch (polar residues) spans Glu-980–Tyr-991.

It belongs to the 5'-3' exonuclease family. XRN2/RAT1 subfamily. Interacts with din1/rai1; the interaction is direct, stabilizes dhp1 protein structure and may stimulate its exoribonuclease activity. The interaction also stimulates din1 pyrophosphohydrolase activity, probably by recruiting it to mRNA substrates.

It is found in the nucleus. In terms of biological role, possesses 5'-&gt;3' exoribonuclease activity. Required for the processing of nuclear mRNA and rRNA precursors. May promote the termination of transcription by RNA polymerase II. Essential for vegetative cell growth and chromosome segregation. The protein is 5'-3' exoribonuclease 2 (dhp1) of Schizosaccharomyces pombe (strain 972 / ATCC 24843) (Fission yeast).